Reading from the N-terminus, the 559-residue chain is Innexin-10 (559 aa).

A run of 4 helical transmembrane segments spans residues 28–48, 102–122, 182–202, and 283–303; these read YFTC…QFGG, QWVP…SLLW, FLWL…YLCT, and IFIL…GSFF. Disordered regions lie at residues 488–514 and 527–559; these read EEKQ…YQNQ and YRTP…STFK. Over residues 503-514 the composition is skewed to low complexity; that stretch reads YTNQNPTPYQNQ. Residues 528–559 show a composition bias toward polar residues; it reads RTPSLSRGTDSRPVSTATDTDQTKKQSMSTFK.

This sequence belongs to the pannexin family.

Its subcellular location is the cell membrane. It localises to the cell junction. It is found in the gap junction. Functionally, structural component of the gap junctions. The chain is Innexin-10 (inx-10) from Caenorhabditis elegans.